A 218-amino-acid polypeptide reads, in one-letter code: Protein OPG170 (218 aa).

The first 16 residues, 1 to 16 (MYSLVFVILMCIPFSF), serve as a signal peptide directing secretion. A glycan (N-linked (GlcNAc...) asparagine; by host) is linked at asparagine 70.

The protein belongs to the orthopoxvirus OPG170 family.

The protein localises to the secreted. Functionally, may interact with several cellular chemokines to interfere with chemokine-glycosaminoglycan (GAG) interactions at the cell surface to alter chemotaxis of nearby responsive cells. The polypeptide is Protein OPG170 (OPG170) (Homo sapiens (Human)).